We begin with the raw amino-acid sequence, 415 residues long: MRGANAWAPLCLLLAAATQLSRQQSPERPVFTCGGILTGESGFIGSEGFPGVYPPNSKCTWKITVPEGKVVVLNFRFIDLESDNLCRYDFVDVYNGHANGQRIGRFCGTFRPGALVSSGNKMMVQMISDANTAGNGFMAMFSAAEPNERGDQYCGGLLDRPSGSFKTPNWPDRDYPAGVTCVWHIVAPKNQLIELKFEKFDVERDNYCRYDYVAVFNGGEVNDARRIGKYCGDSPPAPIVSERNELLIQFLSDLSLTADGFIGHYIFRPKKLPTTTEQPVTTTFPVTTGLKPTVALCQQKCRRTGTLEGNYCSSDFVLAGTVITTITRDGSLHATVSIINIYKEGNLAIQQAGKNMSARLTVVCKQCPLLRRGLNYIIMGQVGEDGRGKIMPNSFIMMFKTKNQKLLDALKNKQC.

An N-terminal signal peptide occupies residues 1–23 (MRGANAWAPLCLLLAAATQLSRQ). 7 disulfides stabilise this stretch: cysteine 33-cysteine 59, cysteine 86-cysteine 107, cysteine 154-cysteine 181, cysteine 208-cysteine 231, cysteine 297-cysteine 364, cysteine 301-cysteine 367, and cysteine 312-cysteine 415. CUB domains follow at residues 33-144 (CGGI…FSAA) and 154-268 (CGGL…YIFR). Residues 297–415 (CQQKCRRTGT…LLDALKNKQC (119 aa)) enclose the NTR domain. N-linked (GlcNAc...) asparagine glycosylation is present at asparagine 355.

In terms of assembly, interacts with heparin with high affinity, and type I or II collagen. O-glycosylated; contains sialic acid. Highly expressed in the heart, trabecular meshwork, pituitary gland, bladder, mammary gland, trachea and placenta and weakly expressed in the brain. Expressed in cartilage.

Its subcellular location is the secreted. In terms of biological role, binds to the C-terminal propeptide of types I and II procollagens and may enhance the cleavage of that propeptide by BMP1. The protein is Procollagen C-endopeptidase enhancer 2 (PCOLCE2) of Homo sapiens (Human).